The chain runs to 124 residues: Small ribosomal subunit protein uS12 (124 aa).

Asp89 is subject to 3-methylthioaspartic acid. The tract at residues 105–124 (QGVKNRKQARSRYGAKKEKS) is disordered. Over residues 108 to 118 (KNRKQARSRYG) the composition is skewed to basic residues.

It belongs to the universal ribosomal protein uS12 family. As to quaternary structure, part of the 30S ribosomal subunit. Contacts proteins S8 and S17. May interact with IF1 in the 30S initiation complex.

With S4 and S5 plays an important role in translational accuracy. Functionally, interacts with and stabilizes bases of the 16S rRNA that are involved in tRNA selection in the A site and with the mRNA backbone. Located at the interface of the 30S and 50S subunits, it traverses the body of the 30S subunit contacting proteins on the other side and probably holding the rRNA structure together. The combined cluster of proteins S8, S12 and S17 appears to hold together the shoulder and platform of the 30S subunit. The polypeptide is Small ribosomal subunit protein uS12 (rpsL) (Mycolicibacterium smegmatis (strain ATCC 700084 / mc(2)155) (Mycobacterium smegmatis)).